Consider the following 851-residue polypeptide: Alanine--tRNA ligase (851 aa).

The Zn(2+) site is built by His535, His539, Cys637, and His641.

Belongs to the class-II aminoacyl-tRNA synthetase family. Zn(2+) is required as a cofactor.

The protein localises to the cytoplasm. The enzyme catalyses tRNA(Ala) + L-alanine + ATP = L-alanyl-tRNA(Ala) + AMP + diphosphate. Catalyzes the attachment of alanine to tRNA(Ala) in a two-step reaction: alanine is first activated by ATP to form Ala-AMP and then transferred to the acceptor end of tRNA(Ala). Also edits incorrectly charged Ser-tRNA(Ala) and Gly-tRNA(Ala) via its editing domain. This Acholeplasma laidlawii (strain PG-8A) protein is Alanine--tRNA ligase.